Here is a 633-residue protein sequence, read N- to C-terminus: MPSCGACTCGAAAVRLITSSLASAQRGISGGRIHMSVLGRLGTFETQILQRAPLRSFTETPAYFASKDGISKDGSGDGNKKSASEGSSKKSGSGNSGKGGNQLRCPKCGDLCTHVETFVSSTRFVKCEKCHHFFVVLSEADSKKSIIKEPESAAEAVKLAFQQKPPPPPKKIYNYLDKYVVGQSFAKKVLSVAVYNHYKRIYNNIPANLRQQAEVEKQTSLTPRELEIRRREDEYRFTKLLQIAGISPHGNALGASMQQQVNQQIPQEKRGGEVLDSSHDDIKLEKSNILLLGPTGSGKTLLAQTLAKCLDVPFAICDCTTLTQAGYVGEDIESVIAKLLQDANYNVEKAQQGIVFLDEVDKIGSVPGIHQLRDVGGEGVQQGLLKLLEGTIVNVPEKNSRKLRGETVQVDTTNILFVASGAFNGLDRIISRRKNEKYLGFGTPSNLGKGRRAAAAADLANRSGESNTHQDIEEKDRLLRHVEARDLIEFGMIPEFVGRLPVVVPLHSLDEKTLVQILTEPRNAVIPQYQALFSMDKCELNVTEDALKAIARLALERKTGARGLRSIMEKLLLEPMFEVPNSDIVCVEVDKEVVEGKKEPGYIRAPTKESSEEEYDSGVEEEGWPRQADAANS.

A mitochondrion-targeting transit peptide spans 1–56 (MPSCGACTCGAAAVRLITSSLASAQRGISGGRIHMSVLGRLGTFETQILQRAPLRS). The disordered stretch occupies residues 68–100 (DGISKDGSGDGNKKSASEGSSKKSGSGNSGKGG). Residues 69 to 83 (GISKDGSGDGNKKSA) show a composition bias toward basic and acidic residues. Low complexity predominate over residues 84-93 (SEGSSKKSGS). A ClpX-type ZB domain is found at 93–146 (SGNSGKGGNQLRCPKCGDLCTHVETFVSSTRFVKCEKCHHFFVVLSEADSKKSI). 4 residues coordinate Zn(2+): cysteine 105, cysteine 108, cysteine 127, and cysteine 130. Position 294–301 (294–301 (PTGSGKTL)) interacts with ATP. Residue lysine 437 is modified to N6-acetyllysine. The span at 598–610 (KEPGYIRAPTKES) shows a compositional bias: basic and acidic residues. The disordered stretch occupies residues 598 to 633 (KEPGYIRAPTKESSEEEYDSGVEEEGWPRQADAANS). A compositionally biased stretch (acidic residues) spans 611–622 (SEEEYDSGVEEE). At serine 617 the chain carries Phosphoserine.

This sequence belongs to the ClpX chaperone family. As to quaternary structure, homohexamer that forms a ring structure; this hexamerization requires ATP binding. Component of the ClpXP complex formed by the assembly of two CLPP heptameric rings with two CLPX hexameric rings, giving rise to a symmetrical structure with two central CLPP rings flanked by a CLPX ring at either end of the complex. Interacts with TFAM. In terms of tissue distribution, higher expression in skeletal muscle and heart and to a lesser extent in liver, brain, placenta, lung, kidney and pancreas.

Its subcellular location is the mitochondrion. The protein resides in the mitochondrion matrix. It is found in the mitochondrion nucleoid. It carries out the reaction ATP + H2O = ADP + phosphate + H(+). In terms of biological role, ATP-dependent chaperone that functions as an unfoldase. As part of the ClpXP protease complex, it recognizes specific protein substrates, unfolds them using energy derived from ATP hydrolysis, and then translocates them to the proteolytic subunit (CLPP) of the ClpXP complex for degradation. Thanks to its chaperone activity, it also functions in the incorporation of the pyridoxal phosphate cofactor into 5-aminolevulinate synthase, thereby activating 5-aminolevulinate (ALA) synthesis, the first step in heme biosynthesis. This chaperone is also involved in the control of mtDNA nucleoid distribution, by regulating mitochondrial transcription factor A (TFAM) activity. In Homo sapiens (Human), this protein is ATP-dependent clpX-like chaperone, mitochondrial.